A 174-amino-acid polypeptide reads, in one-letter code: Negative modulator of initiation of replication (174 aa).

The protein belongs to the SeqA family. Homodimer. Polymerizes to form helical filaments.

The protein resides in the cytoplasm. Its function is as follows. Negative regulator of replication initiation, which contributes to regulation of DNA replication and ensures that replication initiation occurs exactly once per chromosome per cell cycle. Binds to pairs of hemimethylated GATC sequences in the oriC region, thus preventing assembly of replication proteins and re-initiation at newly replicated origins. Repression is relieved when the region becomes fully methylated. The chain is Negative modulator of initiation of replication from Pseudoalteromonas atlantica (strain T6c / ATCC BAA-1087).